The sequence spans 297 residues: uncharacterized protein (297 aa).

The next 5 helical transmembrane spans lie at 114-136 (YNRW…LSSG), 150-170 (LLYD…VFNV), 197-217 (MPIV…GVHL), 227-247 (AFTV…KAMI), and 269-289 (FINT…PGLL).

The protein belongs to the ThrE exporter (TC 2.A.79) family.

The protein localises to the cell inner membrane. This is an uncharacterized protein from Haemophilus influenzae (strain ATCC 51907 / DSM 11121 / KW20 / Rd).